A 507-amino-acid polypeptide reads, in one-letter code: MITLTPGHLTLPQLRRIAREPVQLKLDPASFAKIDAGAKAVADIAAKGEPAYGINTGFGRLASTHIPHDQLELLQKNLVLSHAVGVGEPMARSSVRLLLALKLSSLGRGHSGIRREVMDALITLFNADVLPLIPVKGSVGASGDLAPLAHMSAVLLGVGEVFIRGERASALDGLRVAGLAPLTLQAKEGLALLNGTQASTALALDNMFAIEDLYRTALVAGALSVDAAAGSVKPFDARIHELRGHQGQIDAAASYRELLEGSPINQSHRDCDKVQDPYSLRCQPQVMGACLDQMRHAADVLLVEANAVSDNPLIFPDTGEVLSGGNFHAEPVAFAADNLALAAAEIGALAERRIALLIDATLSGLPPFLVKDGGVNSGFMIAHVTAAALASENKTLAHPASVDSLPTSANQEDHVSMATFAARKLADIADNTKHILAIELLAAAQGVDLRAPYHTSPKLAPVMETIRGKVAHYELDHYFAPDIAVIAKLVGERAFAKVAPFSFASEQ.

Positions 141-143 (ASG) form a cross-link, 5-imidazolinone (Ala-Gly). Residue S142 is modified to 2,3-didehydroalanine (Ser).

It belongs to the PAL/histidase family. Post-translationally, contains an active site 4-methylidene-imidazol-5-one (MIO), which is formed autocatalytically by cyclization and dehydration of residues Ala-Ser-Gly.

It localises to the cytoplasm. It catalyses the reaction L-histidine = trans-urocanate + NH4(+). The protein operates within amino-acid degradation; L-histidine degradation into L-glutamate; N-formimidoyl-L-glutamate from L-histidine: step 1/3. This Burkholderia cenocepacia (strain HI2424) protein is Histidine ammonia-lyase.